A 117-amino-acid chain; its full sequence is Large ribosomal subunit protein uL18 (117 aa).

Belongs to the universal ribosomal protein uL18 family. As to quaternary structure, part of the 50S ribosomal subunit; part of the 5S rRNA/L5/L18/L25 subcomplex. Contacts the 5S and 23S rRNAs.

Its function is as follows. This is one of the proteins that bind and probably mediate the attachment of the 5S RNA into the large ribosomal subunit, where it forms part of the central protuberance. This chain is Large ribosomal subunit protein uL18, found in Sodalis glossinidius (strain morsitans).